The following is a 124-amino-acid chain: Non-structural protein 2 (124 aa).

The DLNP; interaction with MAP1B motif lies at 121–124; sequence DLNP.

Belongs to the pneumovirus non-structural protein 2 family. As to quaternary structure, monomer (instable). Homomultimer. Heteromultimer with NS1. Interacts with host RIGI (via N-terminus); this interaction prevents host signaling pathway involved in interferon production. Interacts with host MAP1B/microtubule-associated protein 1B.

It is found in the host mitochondrion. Its function is as follows. Plays a major role in antagonizing the type I IFN-mediated antiviral response. Acts cooperatively with NS1 to repress activation and nuclear translocation of host IFN-regulatory factor IRF3. Interacts with the host cytoplasmic sensor of viral nucleic acids RIGI and prevents the interaction with its downstream partner MAVS. Together with NS2, participates in the proteasomal degradation of host STAT2, IRF3, IRF7, TBK1 and RIGI through a NS-degradasome involving CUL2 and Elongin-C. The degradasome requires an intact mitochondrial MAVS. Induces host SOCS1 expression. Induces activation of NF-kappa-B. Suppresses premature apoptosis by an NF-kappa-B-dependent, interferon-independent mechanism promoting continued viral replication. This is Non-structural protein 2 (1B) from Homo sapiens (Human).